Consider the following 73-residue polypeptide: uncharacterized protein (73 aa).

Transmembrane regions (helical) follow at residues 4-24 and 51-71; these read LIPV…SPCV and AGAI…IIAL.

Its subcellular location is the cell membrane. This is an uncharacterized protein from Escherichia coli O157:H7.